The primary structure comprises 349 residues: Small ribosomal subunit protein eS6 (349 aa).

A disordered region spans residues 224–349 (RRRSRLSSMR…AKKEKKQKKK (126 aa)). 2 stretches are compositionally biased toward basic and acidic residues: residues 231-251 (SMRD…EKAA) and 260-334 (KKEA…EAAK).

Belongs to the eukaryotic ribosomal protein eS6 family. As to quaternary structure, component of the small ribosomal subunit. Part of the small subunit (SSU) processome, composed of more than 70 proteins and the RNA chaperone small nucleolar RNA (snoRNA) U3. Ribosomal protein S6 is the major substrate of protein kinases in eukaryote ribosomes.

The protein localises to the cytoplasm. The protein resides in the nucleus. It is found in the nucleolus. Its function is as follows. Component of the 40S small ribosomal subunit. Plays an important role in controlling cell growth and proliferation through the selective translation of particular classes of mRNA. Part of the small subunit (SSU) processome, first precursor of the small eukaryotic ribosomal subunit. During the assembly of the SSU processome in the nucleolus, many ribosome biogenesis factors, an RNA chaperone and ribosomal proteins associate with the nascent pre-rRNA and work in concert to generate RNA folding, modifications, rearrangements and cleavage as well as targeted degradation of pre-ribosomal RNA by the RNA exosome. The chain is Small ribosomal subunit protein eS6 (RpS6) from Aedes albopictus (Asian tiger mosquito).